We begin with the raw amino-acid sequence, 110 residues long: Putative membrane protein insertion efficiency factor (110 aa).

It belongs to the UPF0161 family.

The protein localises to the cell inner membrane. Could be involved in insertion of integral membrane proteins into the membrane. This is Putative membrane protein insertion efficiency factor from Aliarcobacter butzleri (strain RM4018) (Arcobacter butzleri).